We begin with the raw amino-acid sequence, 608 residues long: Aspartate--tRNA(Asp/Asn) ligase (608 aa).

Glutamate 175 provides a ligand contact to L-aspartate. The aspartate stretch occupies residues 199–202; the sequence is QLFK. L-aspartate is bound at residue arginine 221. ATP is bound by residues 221–223 and glutamine 230; that span reads RDE. Histidine 453 contacts L-aspartate. Glutamate 487 contributes to the ATP binding site. Arginine 494 is a binding site for L-aspartate. 539–542 is a binding site for ATP; it reads GWDR. The tract at residues 566–608 is disordered; that stretch reads IDPLTDAPAAITPQQRKEAGIDAKPKPKAEAQAEAQAEESAEK. Over residues 580–596 the composition is skewed to basic and acidic residues; it reads QRKEAGIDAKPKPKAEA.

It belongs to the class-II aminoacyl-tRNA synthetase family. Type 1 subfamily. Homodimer.

The protein localises to the cytoplasm. It catalyses the reaction tRNA(Asx) + L-aspartate + ATP = L-aspartyl-tRNA(Asx) + AMP + diphosphate. In terms of biological role, aspartyl-tRNA synthetase with relaxed tRNA specificity since it is able to aspartylate not only its cognate tRNA(Asp) but also tRNA(Asn). Reaction proceeds in two steps: L-aspartate is first activated by ATP to form Asp-AMP and then transferred to the acceptor end of tRNA(Asp/Asn). The sequence is that of Aspartate--tRNA(Asp/Asn) ligase from Corynebacterium glutamicum (strain ATCC 13032 / DSM 20300 / JCM 1318 / BCRC 11384 / CCUG 27702 / LMG 3730 / NBRC 12168 / NCIMB 10025 / NRRL B-2784 / 534).